Reading from the N-terminus, the 608-residue chain is UvrABC system protein C (608 aa).

Positions 22–100 (EKPGIYQYLN…IKKYKPRYNV (79 aa)) constitute a GIY-YIG domain. Positions 214–249 (QEISRLLYQRMQDLAAEMKFEEAQKVKEKYALIENY) constitute a UVR domain.

It belongs to the UvrC family. Interacts with UvrB in an incision complex.

Its subcellular location is the cytoplasm. In terms of biological role, the UvrABC repair system catalyzes the recognition and processing of DNA lesions. UvrC both incises the 5' and 3' sides of the lesion. The N-terminal half is responsible for the 3' incision and the C-terminal half is responsible for the 5' incision. This is UvrABC system protein C from Bacteroides fragilis (strain ATCC 25285 / DSM 2151 / CCUG 4856 / JCM 11019 / LMG 10263 / NCTC 9343 / Onslow / VPI 2553 / EN-2).